The primary structure comprises 349 residues: Transmembrane protein 59-like (349 aa).

The N-terminal stretch at 1–22 is a signal peptide; the sequence is MDSVALMPLLLLLLLQPPPATP. Asparagine 100 is a glycosylation site (N-linked (GlcNAc...) asparagine). The helical transmembrane segment at 276–296 threads the bilayer; it reads ILACCLFLSVLVMLWLSCSTL. Positions 347 to 349 match the Microbody targeting signal motif; sequence TKL.

This sequence belongs to the TMEM59 family.

The protein localises to the golgi apparatus membrane. In terms of biological role, modulates the O-glycosylation and complex N-glycosylation steps occurring during the Golgi maturation of APP. Inhibits APP transport to the cell surface and further shedding. The sequence is that of Transmembrane protein 59-like (TMEM59L) from Bos taurus (Bovine).